The chain runs to 291 residues: Proline iminopeptidase (291 aa).

An AB hydrolase-1 domain is found at 30–274; it reads LLIHGGPGSS…ANSRHLALLD (245 aa). Catalysis depends on serine 103, which acts as the Nucleophile. The active site involves aspartate 242. Histidine 269 serves as the catalytic Proton donor.

Belongs to the peptidase S33 family.

It is found in the cell envelope. It carries out the reaction Release of N-terminal proline from a peptide.. In terms of biological role, releases the N-terminal proline from various substrates. This chain is Proline iminopeptidase, found in Lacticaseibacillus rhamnosus (strain Lc 705) (Lactobacillus rhamnosus).